The chain runs to 339 residues: MPKQKVAILGPGSWGTALAQVLNDNGHEVRLWGNIPEQINEINTRHTNSHYFKDIVLDEAIKATLDLKEALADADAILFVVPTKVTRLVAKQVAQVLDHKAVVMHASKGLEPETHERLSTILEEEIPAQLRSEIVVVSGPSHAEETIVRDITLITAASKDITAAKYVQALFSNHYFRLYTNTDVIGVETAGALKNIIAVGAGALHGLGYGDNAKAAVITRGLAEITRLGVKLGADPLTYSGLSGVGDLIVTGTSVHSRNWRAGAALGRGEKLKDIESNMGMVIEGISTTKVAYEIAQELGVYMPITSAIYKSIYEGADIKESILGMMSNEFRSENEWHS.

3 residues coordinate NADPH: serine 13, tryptophan 14, and lysine 108. Lysine 108, glycine 139, and serine 141 together coordinate sn-glycerol 3-phosphate. Alanine 143 contributes to the NADPH binding site. Positions 194, 247, 257, 258, and 259 each coordinate sn-glycerol 3-phosphate. Lysine 194 acts as the Proton acceptor in catalysis. Residue arginine 258 participates in NADPH binding. NADPH-binding residues include valine 282 and glutamate 284.

This sequence belongs to the NAD-dependent glycerol-3-phosphate dehydrogenase family.

It localises to the cytoplasm. It catalyses the reaction sn-glycerol 3-phosphate + NAD(+) = dihydroxyacetone phosphate + NADH + H(+). It carries out the reaction sn-glycerol 3-phosphate + NADP(+) = dihydroxyacetone phosphate + NADPH + H(+). Its pathway is membrane lipid metabolism; glycerophospholipid metabolism. Its function is as follows. Catalyzes the reduction of the glycolytic intermediate dihydroxyacetone phosphate (DHAP) to sn-glycerol 3-phosphate (G3P), the key precursor for phospholipid synthesis. The sequence is that of Glycerol-3-phosphate dehydrogenase [NAD(P)+] from Streptococcus equi subsp. zooepidemicus (strain H70).